A 399-amino-acid chain; its full sequence is Tryptophan synthase beta chain (399 aa).

An N6-(pyridoxal phosphate)lysine modification is found at Lys-92.

This sequence belongs to the TrpB family. In terms of assembly, tetramer of two alpha and two beta chains. Pyridoxal 5'-phosphate is required as a cofactor.

The enzyme catalyses (1S,2R)-1-C-(indol-3-yl)glycerol 3-phosphate + L-serine = D-glyceraldehyde 3-phosphate + L-tryptophan + H2O. The protein operates within amino-acid biosynthesis; L-tryptophan biosynthesis; L-tryptophan from chorismate: step 5/5. The beta subunit is responsible for the synthesis of L-tryptophan from indole and L-serine. The protein is Tryptophan synthase beta chain of Acidithiobacillus ferrooxidans (strain ATCC 23270 / DSM 14882 / CIP 104768 / NCIMB 8455) (Ferrobacillus ferrooxidans (strain ATCC 23270)).